We begin with the raw amino-acid sequence, 347 residues long: Glycerol-1-phosphate dehydrogenase [NAD(P)+] (347 aa).

Residues 90-94 and 112-115 each bind NAD(+); these read GRPVD and TAIS. Position 117 (D117) interacts with substrate. S121 is an NAD(+) binding site. Position 165 (D165) interacts with substrate. 2 residues coordinate Zn(2+): D165 and H245. H249 contributes to the substrate binding site. Zn(2+) is bound at residue H262.

This sequence belongs to the glycerol-1-phosphate dehydrogenase family. As to quaternary structure, homodimer. It depends on Zn(2+) as a cofactor.

The protein resides in the cytoplasm. The enzyme catalyses sn-glycerol 1-phosphate + NAD(+) = dihydroxyacetone phosphate + NADH + H(+). It carries out the reaction sn-glycerol 1-phosphate + NADP(+) = dihydroxyacetone phosphate + NADPH + H(+). Its pathway is membrane lipid metabolism; glycerophospholipid metabolism. Its function is as follows. Catalyzes the NAD(P)H-dependent reduction of dihydroxyacetonephosphate (DHAP or glycerone phosphate) to glycerol 1-phosphate (G1P). The G1P thus generated is used as the glycerophosphate backbone of phospholipids in the cellular membranes of Archaea. This chain is Glycerol-1-phosphate dehydrogenase [NAD(P)+], found in Thermofilum pendens (strain DSM 2475 / Hrk 5).